A 235-amino-acid polypeptide reads, in one-letter code: Small ribosomal subunit protein uS3 (235 aa).

One can recognise a KH type-2 domain in the interval 39 to 107 (IREILHKELK…DVVINIVEIR (69 aa)). The segment at 215–235 (QDKRMAEGDGGGSSRPRRDAA) is disordered.

The protein belongs to the universal ribosomal protein uS3 family. As to quaternary structure, part of the 30S ribosomal subunit. Forms a tight complex with proteins S10 and S14.

In terms of biological role, binds the lower part of the 30S subunit head. Binds mRNA in the 70S ribosome, positioning it for translation. The sequence is that of Small ribosomal subunit protein uS3 from Rhodopseudomonas palustris (strain ATCC BAA-98 / CGA009).